A 430-amino-acid chain; its full sequence is Trigger factor (430 aa).

A PPIase FKBP-type domain is found at 157–242 (GDLVALETWS…AVEVSEPVLP (86 aa)).

It belongs to the FKBP-type PPIase family. Tig subfamily.

The protein resides in the cytoplasm. It catalyses the reaction [protein]-peptidylproline (omega=180) = [protein]-peptidylproline (omega=0). Its function is as follows. Involved in protein export. Acts as a chaperone by maintaining the newly synthesized protein in an open conformation. Functions as a peptidyl-prolyl cis-trans isomerase. In Xanthomonas oryzae pv. oryzae (strain PXO99A), this protein is Trigger factor.